Consider the following 297-residue polypeptide: 1D-myo-inositol 2-acetamido-2-deoxy-alpha-D-glucopyranoside deacetylase (297 aa).

The Zn(2+) site is built by His-11, Asp-14, and His-154.

This sequence belongs to the MshB deacetylase family. It depends on Zn(2+) as a cofactor.

The catalysed reaction is 1D-myo-inositol 2-acetamido-2-deoxy-alpha-D-glucopyranoside + H2O = 1D-myo-inositol 2-amino-2-deoxy-alpha-D-glucopyranoside + acetate. Its function is as follows. Catalyzes the deacetylation of 1D-myo-inositol 2-acetamido-2-deoxy-alpha-D-glucopyranoside (GlcNAc-Ins) in the mycothiol biosynthesis pathway. The chain is 1D-myo-inositol 2-acetamido-2-deoxy-alpha-D-glucopyranoside deacetylase from Tsukamurella paurometabola (strain ATCC 8368 / DSM 20162 / CCUG 35730 / CIP 100753 / JCM 10117 / KCTC 9821 / NBRC 16120 / NCIMB 702349 / NCTC 13040) (Corynebacterium paurometabolum).